Consider the following 223-residue polypeptide: MSAKIGVITFPGTLDDVDALRAVRIAGAEPVNLWHADEDLRGVDAVVVPGGFSYGDYLRTGAISALAPVMQSVIEAAGRGMPVLGICNGFQILTEARLLPGALTRNQGLHFHCVDTHLEVVNTDTAWTGTLEQGQKILVPAKHGEGRFQAEPDTIRMLEEEGRVVFRYTDNFNGSINGIAGITNETGRVVGLMPHPEHAVETLTGPSVDGLELFLSAIGTIAA.

One can recognise a Glutamine amidotransferase type-1 domain in the interval Lys-4–Ala-223. Cys-87 serves as the catalytic Nucleophile. Residues His-195 and Glu-197 contribute to the active site.

Part of the FGAM synthase complex composed of 1 PurL, 1 PurQ and 2 PurS subunits.

It is found in the cytoplasm. It carries out the reaction N(2)-formyl-N(1)-(5-phospho-beta-D-ribosyl)glycinamide + L-glutamine + ATP + H2O = 2-formamido-N(1)-(5-O-phospho-beta-D-ribosyl)acetamidine + L-glutamate + ADP + phosphate + H(+). The enzyme catalyses L-glutamine + H2O = L-glutamate + NH4(+). The protein operates within purine metabolism; IMP biosynthesis via de novo pathway; 5-amino-1-(5-phospho-D-ribosyl)imidazole from N(2)-formyl-N(1)-(5-phospho-D-ribosyl)glycinamide: step 1/2. Functionally, part of the phosphoribosylformylglycinamidine synthase complex involved in the purines biosynthetic pathway. Catalyzes the ATP-dependent conversion of formylglycinamide ribonucleotide (FGAR) and glutamine to yield formylglycinamidine ribonucleotide (FGAM) and glutamate. The FGAM synthase complex is composed of three subunits. PurQ produces an ammonia molecule by converting glutamine to glutamate. PurL transfers the ammonia molecule to FGAR to form FGAM in an ATP-dependent manner. PurS interacts with PurQ and PurL and is thought to assist in the transfer of the ammonia molecule from PurQ to PurL. The chain is Phosphoribosylformylglycinamidine synthase subunit PurQ from Corynebacterium efficiens (strain DSM 44549 / YS-314 / AJ 12310 / JCM 11189 / NBRC 100395).